The sequence spans 67 residues: Cell division protein ZapB (67 aa).

The stretch at 3-59 (LELLSKLETKIQAALETIELLKMELEEEKQTSSSLSEQNQQLQQELTSWNEKVTGLV) forms a coiled coil.

It belongs to the ZapB family. As to quaternary structure, homodimer. The ends of the coiled-coil dimer bind to each other, forming polymers. Interacts with FtsZ.

It localises to the cytoplasm. Functionally, non-essential, abundant cell division factor that is required for proper Z-ring formation. It is recruited early to the divisome by direct interaction with FtsZ, stimulating Z-ring assembly and thereby promoting cell division earlier in the cell cycle. Its recruitment to the Z-ring requires functional FtsA or ZipA. This is Cell division protein ZapB from Shewanella halifaxensis (strain HAW-EB4).